The sequence spans 316 residues: Ribose-phosphate pyrophosphokinase (316 aa).

ATP contacts are provided by residues 41–43 (DGE) and 100–101 (RQ). Mg(2+) is bound by residues His-134 and Asp-175. The active site involves Lys-198. Residues Arg-200, Asp-224, and 228 to 232 (DTARS) contribute to the D-ribose 5-phosphate site.

The protein belongs to the ribose-phosphate pyrophosphokinase family. Class I subfamily. As to quaternary structure, homohexamer. The cofactor is Mg(2+).

The protein localises to the cytoplasm. It carries out the reaction D-ribose 5-phosphate + ATP = 5-phospho-alpha-D-ribose 1-diphosphate + AMP + H(+). Its pathway is metabolic intermediate biosynthesis; 5-phospho-alpha-D-ribose 1-diphosphate biosynthesis; 5-phospho-alpha-D-ribose 1-diphosphate from D-ribose 5-phosphate (route I): step 1/1. Functionally, involved in the biosynthesis of the central metabolite phospho-alpha-D-ribosyl-1-pyrophosphate (PRPP) via the transfer of pyrophosphoryl group from ATP to 1-hydroxyl of ribose-5-phosphate (Rib-5-P). The sequence is that of Ribose-phosphate pyrophosphokinase from Thermosipho africanus (strain TCF52B).